The following is a 149-amino-acid chain: Nucleoside diphosphate kinase 1 (149 aa).

K10, F58, R86, T92, R103, and N113 together coordinate ATP. The active-site Pros-phosphohistidine intermediate is H116.

This sequence belongs to the NDK family. Mg(2+) is required as a cofactor.

The enzyme catalyses a 2'-deoxyribonucleoside 5'-diphosphate + ATP = a 2'-deoxyribonucleoside 5'-triphosphate + ADP. The catalysed reaction is a ribonucleoside 5'-diphosphate + ATP = a ribonucleoside 5'-triphosphate + ADP. Its function is as follows. Major role in the synthesis of nucleoside triphosphates other than ATP. The ATP gamma phosphate is transferred to the NDP beta phosphate via a ping-pong mechanism, using a phosphorylated active-site intermediate. This NDK is microtubule-associated. This chain is Nucleoside diphosphate kinase 1 (NDPK1), found in Pisum sativum (Garden pea).